Consider the following 197-residue polypeptide: Probable nicotinate-nucleotide adenylyltransferase (197 aa).

It belongs to the NadD family.

It carries out the reaction nicotinate beta-D-ribonucleotide + ATP + H(+) = deamido-NAD(+) + diphosphate. It participates in cofactor biosynthesis; NAD(+) biosynthesis; deamido-NAD(+) from nicotinate D-ribonucleotide: step 1/1. In terms of biological role, catalyzes the reversible adenylation of nicotinate mononucleotide (NaMN) to nicotinic acid adenine dinucleotide (NaAD). The polypeptide is Probable nicotinate-nucleotide adenylyltransferase (Pseudothermotoga lettingae (strain ATCC BAA-301 / DSM 14385 / NBRC 107922 / TMO) (Thermotoga lettingae)).